Reading from the N-terminus, the 566-residue chain is Protein downstream neighbor of Son (566 aa).

The segment at 1-110 (MALSVPGYSP…QPEAPVPFLD (110 aa)) is disordered. 2 positions are modified to phosphoserine: Ser28 and Ser34. The segment covering 62–72 (GGRGGGSGGGP) has biased composition (gly residues). Residues 73–82 (AAARRNPFAR) are compositionally biased toward low complexity.

Belongs to the DONSON family. As to quaternary structure, component of the replisome complex composed of at least DONSON, MCM2, MCM7, PCNA and TICRR; interaction at least with PCNA occurs during DNA replication. Expressed in the brain, with higher levels in prenatal compared to adult brain.

Its subcellular location is the nucleus. Its function is as follows. Replisome component that maintains genome stability by protecting stalled or damaged replication forks. After the induction of replication stress, required for the stabilization of stalled replication forks, the efficient activation of the intra-S-phase and G/2M cell-cycle checkpoints and the maintenance of genome stability. The protein is Protein downstream neighbor of Son (DONSON) of Homo sapiens (Human).